A 99-amino-acid chain; its full sequence is Large ribosomal subunit protein uL23 (99 aa).

It belongs to the universal ribosomal protein uL23 family. In terms of assembly, part of the 50S ribosomal subunit. Contacts protein L29, and trigger factor when it is bound to the ribosome.

One of the early assembly proteins it binds 23S rRNA. One of the proteins that surrounds the polypeptide exit tunnel on the outside of the ribosome. Forms the main docking site for trigger factor binding to the ribosome. This chain is Large ribosomal subunit protein uL23, found in Francisella tularensis subsp. tularensis (strain SCHU S4 / Schu 4).